The chain runs to 878 residues: Pyruvate, phosphate dikinase (878 aa).

The segment at 1–347 (MKKLIYYFGS…LYILQTRTAK (347 aa)) is N-terminal. R96 contributes to the ATP binding site. The tract at residues 348-404 (RTAIAAIKIAVQMVEEKLISKEQALMRIDPESLNQLLHTRIDYSKGLTSIADGLPAS) is linker 1. A central region spans residues 405 to 502 (PGAATGIIVF…ILKQDDIITI (98 aa)). T457 is modified (phosphothreonine; by PDRP1). H459 (tele-phosphohistidine intermediate) is an active-site residue. A linker 2 region spans residues 503–537 (DGGTGKVFLGAVPLIQPTFSEESKLILEWADETSK). Positions 538 to 878 (LKIRTNAETV…AAAQAKIKHG (341 aa)) are C-terminal. The substrate site is built by R565, R621, E749, G770, T771, N772, and D773. A Mg(2+)-binding site is contributed by E749. D773 is a Mg(2+) binding site. Residue C835 is the Proton donor of the active site.

This sequence belongs to the PEP-utilizing enzyme family. In terms of assembly, homodimer. Requires Mg(2+) as cofactor. In terms of processing, phosphorylation of Thr-457 in the dark inactivates the enzyme. Dephosphorylation upon light stimulation reactivates the enzyme.

It catalyses the reaction pyruvate + phosphate + ATP = phosphoenolpyruvate + AMP + diphosphate + H(+). Its activity is regulated as follows. Activated by light-induced dephosphorylation. Inhibited by dark-induced phosphorylation. Both reactions are catalyzed by PDRP1. Its function is as follows. Catalyzes the reversible phosphorylation of pyruvate and phosphate. This is Pyruvate, phosphate dikinase (ppdK) from Rickettsia bellii (strain RML369-C).